We begin with the raw amino-acid sequence, 189 residues long: GTPase NRas (189 aa).

GTP-binding positions include 10 to 18 (GAGGVGKSA) and 29 to 30 (VD). An Effector region motif is present at residues 32–40 (YDPTIEDSY). 57–61 (DTAGQ) provides a ligand contact to GTP. At Ser-89 the chain carries Phosphoserine. 116 to 119 (NKCD) serves as a coordination point for GTP. Positions 166-185 (YRLKKLNSSDDGTQGCMGSP) are hypervariable region. Lys-170 participates in a covalent cross-link: Glycyl lysine isopeptide (Lys-Gly) (interchain with G-Cter in ubiquitin). Cys-181 carries the S-palmitoyl cysteine lipid modification. A lipid anchor (S-farnesyl cysteine) is attached at Cys-186. A propeptide spans 187 to 189 (VLM) (removed in mature form).

The protein belongs to the small GTPase superfamily. Ras family. Interacts (active GTP-bound form preferentially) with RGS14. Interacts (active GTP-bound form) with RASSF7. Interacts (active GTP-bound form) with both SHOC2 and PP1c (all isoforms) to form a tertiary complex; SHOC2 and PP1c preferably bind M-Ras/MRAS, but they also bind K-Ras/KRAS, N-Ras/NRAS and H-Ras/HRAS. Palmitoylated by the ZDHHC9-GOLGA7 complex. Depalmitoylated by ABHD17A, ABHD17B and ABHD17C. A continuous cycle of de- and re-palmitoylation regulates rapid exchange between plasma membrane and Golgi. In terms of processing, acetylation at Lys-104 prevents interaction with guanine nucleotide exchange factors (GEFs). Post-translationally, ubiquitinated by the BCR(LZTR1) E3 ubiquitin ligase complex at Lys-170 in a non-degradative manner, leading to inhibit Ras signaling by decreasing Ras association with membranes. Phosphorylation at Ser-89 enhances NRAS association with its downstream effectors.

Its subcellular location is the cell membrane. The protein resides in the golgi apparatus membrane. It carries out the reaction GTP + H2O = GDP + phosphate + H(+). With respect to regulation, alternates between an inactive form bound to GDP and an active form bound to GTP. Activated by a guanine nucleotide-exchange factor (GEF) and inactivated by a GTPase-activating protein (GAP). In terms of biological role, ras proteins bind GDP/GTP and possess intrinsic GTPase activity. This is GTPase NRas (Nras) from Mus musculus (Mouse).